Here is a 379-residue protein sequence, read N- to C-terminus: Succinyl-diaminopimelate desuccinylase (379 aa).

Residue His70 coordinates Zn(2+). Asp72 is a catalytic residue. Asp103 is a Zn(2+) binding site. Catalysis depends on Glu137, which acts as the Proton acceptor. Zn(2+)-binding residues include Glu138, Glu166, and His352.

Belongs to the peptidase M20A family. DapE subfamily. Homodimer. Zn(2+) is required as a cofactor. The cofactor is Co(2+).

It carries out the reaction N-succinyl-(2S,6S)-2,6-diaminopimelate + H2O = (2S,6S)-2,6-diaminopimelate + succinate. It participates in amino-acid biosynthesis; L-lysine biosynthesis via DAP pathway; LL-2,6-diaminopimelate from (S)-tetrahydrodipicolinate (succinylase route): step 3/3. Functionally, catalyzes the hydrolysis of N-succinyl-L,L-diaminopimelic acid (SDAP), forming succinate and LL-2,6-diaminopimelate (DAP), an intermediate involved in the bacterial biosynthesis of lysine and meso-diaminopimelic acid, an essential component of bacterial cell walls. The chain is Succinyl-diaminopimelate desuccinylase from Shewanella sp. (strain W3-18-1).